Here is a 496-residue protein sequence, read N- to C-terminus: Glycerol kinase (496 aa).

Thr12 contributes to the ADP binding site. 3 residues coordinate ATP: Thr12, Thr13, and Ser14. A sn-glycerol 3-phosphate-binding site is contributed by Thr12. Arg16 is an ADP binding site. 3 residues coordinate sn-glycerol 3-phosphate: Arg82, Glu83, and Tyr134. 3 residues coordinate glycerol: Arg82, Glu83, and Tyr134. His230 is subject to Phosphohistidine; by HPr. Residue Asp244 coordinates sn-glycerol 3-phosphate. Residues Asp244 and Gln245 each contribute to the glycerol site. 2 residues coordinate ADP: Thr266 and Gly309. Positions 266, 309, 313, and 410 each coordinate ATP. ADP is bound by residues Gly410 and Asn414.

This sequence belongs to the FGGY kinase family. As to quaternary structure, homotetramer and homodimer (in equilibrium). The phosphoenolpyruvate-dependent sugar phosphotransferase system (PTS), including enzyme I, and histidine-containing protein (HPr) are required for the phosphorylation, which leads to the activation of the enzyme.

It carries out the reaction glycerol + ATP = sn-glycerol 3-phosphate + ADP + H(+). Its pathway is polyol metabolism; glycerol degradation via glycerol kinase pathway; sn-glycerol 3-phosphate from glycerol: step 1/1. With respect to regulation, activated by phosphorylation and inhibited by fructose 1,6-bisphosphate (FBP). In terms of biological role, key enzyme in the regulation of glycerol uptake and metabolism. Catalyzes the phosphorylation of glycerol to yield sn-glycerol 3-phosphate. The sequence is that of Glycerol kinase from Bacillus cytotoxicus (strain DSM 22905 / CIP 110041 / 391-98 / NVH 391-98).